Here is a 346-residue protein sequence, read N- to C-terminus: Syntaxin UFE1 (346 aa).

Over 1–324 the chain is Cytoplasmic; it reads MMSDLTPIFR…RKAKRAAGRT (324 aa). The t-SNARE coiled-coil homology domain occupies 255 to 317; it reads LNQKNEQLKK…KKGNKELRKA (63 aa). A helical; Anchor for type IV membrane protein membrane pass occupies residues 325-342; that stretch reads AKMTTYGAIIMGVFILFL. The Lumenal portion of the chain corresponds to 343 to 346; the sequence is DYVG.

Belongs to the syntaxin family. As to quaternary structure, component of a SNARE complex consisting of UFE1, USE1, SEC20 and SEC22 or YKT6.

It localises to the endoplasmic reticulum membrane. In terms of biological role, syntaxin required for targeting and fusion of Golgi-derived retrograde transport vesicles with the ER. The protein is Syntaxin UFE1 (UFE1) of Saccharomyces cerevisiae (strain ATCC 204508 / S288c) (Baker's yeast).